The primary structure comprises 465 residues: MAEESSLEVQSQTAQTQARLRFSTRDEDLALPESTGPILVPTGLRRYALSTLVNNLLATEKPVPLEFLINGTYLRTSVDEFLTANGISAETTLDVEYVRALIPPLHVASFLHDDWVSSVDVLSDSQNEERIISASYDGLLRVWNMSSEIIHTSASAKDGGHQSAIKCVRFLSASQIVSSGIDRTVRLWKYTDQEKGITPQIEYYGHKGSVDSIAVHGNRILSASADHTVGFWSTKKSESPAVPQNLLPSSSARSSKRRKLNSSASTSQRGPLALLKGHTAPVSAAIFDAKDSTVGYSTSWDHSLRTWDLVTAALVDTRTTSHSLLCAQHLPEHTLLAAGSAARHVTLIDPRASATTVSAMTLRGHTNAVVCLARDPDSTYGLISGSHDGTSRIWDIRSTKTDTDGVVSESIYTIARKSAGEGKRVGGDGVKVFDVCWDKKVGIVSVGEDKVIQINRGEGVVPKTA.

A ubiquitin-like (UBL) domain region spans residues 18-99; the sequence is ARLRFSTRDE…ETTLDVEYVR (82 aa). 7 WD repeats span residues 111–153, 160–198, 205–242, 277–317, 319–358, 364–404, and 427–465; these read LHDD…IHTS, GHQS…KGIT, GHKG…SPAV, GHTA…LVDT, TTSH…TTVS, GHTN…TDTD, and GDGV…PKTA. Positions 235–272 are disordered; that stretch reads KKSESPAVPQNLLPSSSARSSKRRKLNSSASTSQRGPL.

The protein belongs to the WD repeat WDR12/YTM1 family. In terms of assembly, component of the NOP7 complex, composed of ERB1, NOP7 and YTM1. The complex is held together by ERB1, which interacts with NOP7 via its N-terminal domain and with YTM1 via a high-affinity interaction between the seven-bladed beta-propeller domains of the 2 proteins. The NOP7 complex associates with the 66S pre-ribosome. Interacts (via UBL domain) with MDN1 (via VWFA/MIDAS domain).

The protein resides in the nucleus. Its subcellular location is the nucleolus. It is found in the nucleoplasm. In terms of biological role, component of the NOP7 complex, which is required for maturation of the 25S and 5.8S ribosomal RNAs and formation of the 60S ribosome. This chain is Ribosome biogenesis protein YTM1, found in Coccidioides immitis (strain RS) (Valley fever fungus).